We begin with the raw amino-acid sequence, 79 residues long: Ixosin (79 aa).

Positions 1 to 56 are cleaved as a propeptide — removed in mature form; it reads MSAHKVQIGLSSGQFRVALQVPSVRLKGLGSFHTGSIVLPSQGSLREDQISLHNQD.

In terms of biological role, has antifungal activity against C.albicans. Has antibacterial activity against the Gram-positive bacterium S.aureus and the Gram-negative bacterium E.coli. Lacks hemolytic activity against rabbit erythrocytes. The chain is Ixosin from Ixodes sinensis (Hard tick).